Consider the following 758-residue polypeptide: Relaxin receptor 1 (758 aa).

Over 1–408 the chain is Extracellular; that stretch reads MTSGPFFFCV…LENLLASIIQ (408 aa). Positions 26-63 constitute an LDL-receptor class A domain; it reads SCPLGSFPCGNISKCLPQLLHCNGVDDCGNQADEDNCG. 3 disulfides stabilise this stretch: C27-C40, C34-C53, and C47-C62. N-linked (GlcNAc...) asparagine glycosylation is present at N36. Ca(2+) is bound by residues L45, N48, V50, D52, D58, and E59. 11 LRR repeats span residues 105–125, 126–148, 149–172, 173–196, 198–220, 221–244, 246–269, 270–293, 294–317, 319–341, and 342–365; these read LCRD…PSVS, SNVT…SFRK, YHDL…AFRG, LHSL…VFED, HRLE…TFYG, LNSL…PLCQ, MPRL…TFIS, CNNL…AFTH, LQKL…IFKD, KELS…QFDY, and LAKL…MFRP. The N-linked (GlcNAc...) asparagine glycan is linked to N127. Residues N264 and N272 are each glycosylated (N-linked (GlcNAc...) asparagine). N-linked (GlcNAc...) asparagine glycosylation occurs at N325. N368 carries an N-linked (GlcNAc...) asparagine glycan. The helical transmembrane segment at 409–429 threads the bilayer; that stretch reads RVFVWVVSAITCFGNIFVICM. Over 430-443 the chain is Cytoplasmic; the sequence is RPYIRSENKLHAMS. The chain crosses the membrane as a helical span at residues 444–464; the sequence is IMSLCCADCLMGVYLFVIGAF. The Extracellular segment spans residues 465 to 486; that stretch reads DLKFRGEYRKHAQPWMESVHCQ. C485 and C563 are joined by a disulfide. The helical transmembrane segment at 487-507 threads the bilayer; sequence FMGSLAVLSTEVSVLLLTFLT. The Cytoplasmic segment spans residues 508–527; that stretch reads LEKYICIVYPFRCLRPRKCR. Residues 528-548 form a helical membrane-spanning segment; it reads TVAVLIFIWITGFIVAFAPLG. Residues 549 to 577 lie on the Extracellular side of the membrane; it reads NKEFFKNYYGTNGVCFPLHSEDTGSTGAQ. Residues 578–598 traverse the membrane as a helical segment; the sequence is IYSVVIFLGINLVAFIIIVFS. At 599–629 the chain is on the cytoplasmic side; sequence YGSMFYSVHQSTITATEIQKQVKKEMILAKR. The chain crosses the membrane as a helical span at residues 630–650; it reads FFFIVFTDALCWIPIFILKFL. Topologically, residues 651-660 are extracellular; it reads SLIRVEIPDT. The chain crosses the membrane as a helical span at residues 661 to 681; it reads ITSWVVIFILPINSALNPIIY. The Cytoplasmic segment spans residues 682-758; the sequence is TLTTRPFKEM…SRSSRLNSYS (77 aa).

This sequence belongs to the G-protein coupled receptor 1 family. In terms of assembly, interacts with C1QTNF8. In terms of tissue distribution, detected in brain cortex, and at low levels in testis.

It is found in the cell membrane. Its function is as follows. Receptor for relaxins. The activity of this receptor is mediated by G proteins leading to stimulation of adenylate cyclase and an increase of cAMP. Binding of the ligand may also activate a tyrosine kinase pathway that inhibits the activity of a phosphodiesterase that degrades cAMP. This is Relaxin receptor 1 (Rxfp1) from Rattus norvegicus (Rat).